The primary structure comprises 396 residues: MEKNQNPNTWSDLPLDLLNLVFKRLSFANFRQAKSVCSSWYSASKQSVPKNQIPWLMLFPKDKNNNKNSSCTIFFNPEDKDQLYQTQDLGVEFAKSVCLATYGSWLLMQDSKYNLYILNPFTYEKIGLPAIESQQVGMVKVDQTIDDDFLTFDDHNHVKLFKGNNTVRTPVFWIDEKTKEYIALWGLGYWCVVYAKNGDKLWNQIPEIILDSLDMVYKDHKLYSFSYRNLFTILDFSGEIPRKAFQCFMHVYRSEWLSPRSRQLSNSWCVAETKLVVTVTGDVLLVERMLRHWSRIQSFNVYKFYSSGTFLDKYELADSLGDEAMLLDLGITVLANEVEGLHRNTIYFSDSHDTTTKDLFLFNYETREMEPLHKFDFDCSLLELSARWFLPSFSHT.

Residues 7–58 (PNTWSDLPLDLLNLVFKRLSFANFRQAKSVCSSWYSASKQSVPKNQIPWLML) form the F-box domain.

The sequence is that of Putative F-box protein At4g22660 from Arabidopsis thaliana (Mouse-ear cress).